Reading from the N-terminus, the 369-residue chain is Glutamine synthetase 2 cytoplasmic (369 aa).

The region spanning V32–G112 is the GS beta-grasp domain. Positions K119 to E369 constitute a GS catalytic domain.

It belongs to the glutamine synthetase family. Homooctamer.

Its subcellular location is the cytoplasm. The enzyme catalyses L-glutamate + NH4(+) + ATP = L-glutamine + ADP + phosphate + H(+). In Drosophila melanogaster (Fruit fly), this protein is Glutamine synthetase 2 cytoplasmic (Gs2).